The primary structure comprises 276 residues: Bifunctional protein FolD (276 aa).

NADP(+) contacts are provided by residues 157 to 159 (NRS), serine 182, and isoleucine 223.

Belongs to the tetrahydrofolate dehydrogenase/cyclohydrolase family. As to quaternary structure, homodimer.

It catalyses the reaction (6R)-5,10-methylene-5,6,7,8-tetrahydrofolate + NADP(+) = (6R)-5,10-methenyltetrahydrofolate + NADPH. The enzyme catalyses (6R)-5,10-methenyltetrahydrofolate + H2O = (6R)-10-formyltetrahydrofolate + H(+). Its pathway is one-carbon metabolism; tetrahydrofolate interconversion. Its function is as follows. Catalyzes the oxidation of 5,10-methylenetetrahydrofolate to 5,10-methenyltetrahydrofolate and then the hydrolysis of 5,10-methenyltetrahydrofolate to 10-formyltetrahydrofolate. The chain is Bifunctional protein FolD from Thermoplasma acidophilum (strain ATCC 25905 / DSM 1728 / JCM 9062 / NBRC 15155 / AMRC-C165).